The following is a 418-amino-acid chain: Tyrosine--tRNA ligase (418 aa).

The 'HIGH' region signature appears at 42–51; it reads PTAPDLHLGH. Residues 226 to 230 carry the 'KMSKS' region motif; sequence KMSKS. K229 serves as a coordination point for ATP. The S4 RNA-binding domain maps to 339–400; that stretch reads VRLVALLTKS…GKRNFAKVRL (62 aa).

The protein belongs to the class-I aminoacyl-tRNA synthetase family. TyrS type 2 subfamily. In terms of assembly, homodimer.

It localises to the cytoplasm. It carries out the reaction tRNA(Tyr) + L-tyrosine + ATP = L-tyrosyl-tRNA(Tyr) + AMP + diphosphate + H(+). Its function is as follows. Catalyzes the attachment of tyrosine to tRNA(Tyr) in a two-step reaction: tyrosine is first activated by ATP to form Tyr-AMP and then transferred to the acceptor end of tRNA(Tyr). The polypeptide is Tyrosine--tRNA ligase (Xylella fastidiosa (strain 9a5c)).